A 184-amino-acid chain; its full sequence is MNEFSILCRVLGSLYYRQPQDPLLVPLFTLIREGKLAANWPLEQDELLTRLQKSCDMTQVSADYNALFIGDECAVPPYRSAWVEGATEAEVRAFLSERGMPLADTPADHIGTLLLAASWLEDQSTEDESEALETLFSEYLLPWCGAFLGKVEAHATTPFWRTMAPLTRDAISAMWDELEEDSEE.

It belongs to the TorD/DmsD family. Interacts with YcdX.

Functionally, acts as a chaperone that increases YcdX activity, maybe by facilitating the correct insertion of the zinc ions into the catalytic site of YcdX. Involved in the swarming motility process. This is Chaperone protein YcdY (ycdY) from Escherichia coli (strain K12).